Consider the following 193-residue polypeptide: uncharacterized protein (193 aa).

4 helical membrane-spanning segments follow: residues 8-28 (GVLV…VVAI), 46-66 (FFIA…VASA), 82-102 (GLSI…ALVV), and 141-161 (IALT…LLAA).

This sequence to M.leprae ML1222.

Its subcellular location is the cell membrane. This is an uncharacterized protein from Mycobacterium tuberculosis (strain CDC 1551 / Oshkosh).